Consider the following 130-residue polypeptide: Small ribosomal subunit protein uS8 (130 aa).

Belongs to the universal ribosomal protein uS8 family. As to quaternary structure, part of the 30S ribosomal subunit. Contacts proteins S5 and S12.

Its function is as follows. One of the primary rRNA binding proteins, it binds directly to 16S rRNA central domain where it helps coordinate assembly of the platform of the 30S subunit. The protein is Small ribosomal subunit protein uS8 of Pseudomonas syringae pv. tomato (strain ATCC BAA-871 / DC3000).